We begin with the raw amino-acid sequence, 430 residues long: Protein translocase subunit SecY (430 aa).

The next 10 helical transmembrane spans lie at 18–38 (VIFT…PVPG), 67–87 (FSIF…MQLL), 118–138 (IVLG…FFPG), 145–165 (VSVY…LMWL), 177–197 (GISI…LNLI), 213–233 (IVVI…VIFV), 270–290 (VIPV…AGLF), 309–329 (PIGM…YTFI), 369–389 (FVGS…IKFA), and 390–410 (DLPQ…GVAL).

The protein belongs to the SecY/SEC61-alpha family. As to quaternary structure, component of the Sec protein translocase complex. Heterotrimer consisting of SecY, SecE and SecG subunits. The heterotrimers can form oligomers, although 1 heterotrimer is thought to be able to translocate proteins. Interacts with the ribosome. Interacts with SecDF, and other proteins may be involved. Interacts with SecA.

The protein resides in the cell membrane. Its function is as follows. The central subunit of the protein translocation channel SecYEG. Consists of two halves formed by TMs 1-5 and 6-10. These two domains form a lateral gate at the front which open onto the bilayer between TMs 2 and 7, and are clamped together by SecE at the back. The channel is closed by both a pore ring composed of hydrophobic SecY resides and a short helix (helix 2A) on the extracellular side of the membrane which forms a plug. The plug probably moves laterally to allow the channel to open. The ring and the pore may move independently. The sequence is that of Protein translocase subunit SecY from Halalkalibacterium halodurans (strain ATCC BAA-125 / DSM 18197 / FERM 7344 / JCM 9153 / C-125) (Bacillus halodurans).